A 377-amino-acid chain; its full sequence is Chaperone protein DnaJ (377 aa).

Residues 5 to 70 (DYYEILGVSK…QKRAAYDQYG (66 aa)) form the J domain. Residues 132 to 210 (GVTKEIRIPT…CHGHGRVEKT (79 aa)) form a CR-type zinc finger. The Zn(2+) site is built by cysteine 145, cysteine 148, cysteine 162, cysteine 165, cysteine 184, cysteine 187, cysteine 198, and cysteine 201. CXXCXGXG motif repeat units lie at residues 145–152 (CDVCHGSG), 162–169 (CPTCHGAG), 184–191 (CPHCQGRG), and 198–205 (CNKCHGHG).

Belongs to the DnaJ family. Homodimer. Zn(2+) serves as cofactor.

The protein localises to the cytoplasm. Functionally, participates actively in the response to hyperosmotic and heat shock by preventing the aggregation of stress-denatured proteins and by disaggregating proteins, also in an autonomous, DnaK-independent fashion. Unfolded proteins bind initially to DnaJ; upon interaction with the DnaJ-bound protein, DnaK hydrolyzes its bound ATP, resulting in the formation of a stable complex. GrpE releases ADP from DnaK; ATP binding to DnaK triggers the release of the substrate protein, thus completing the reaction cycle. Several rounds of ATP-dependent interactions between DnaJ, DnaK and GrpE are required for fully efficient folding. Also involved, together with DnaK and GrpE, in the DNA replication of plasmids through activation of initiation proteins. The chain is Chaperone protein DnaJ from Klebsiella pneumoniae subsp. pneumoniae (strain ATCC 700721 / MGH 78578).